Here is a 443-residue protein sequence, read N- to C-terminus: ATP-dependent protease ATPase subunit HslU (443 aa).

ATP-binding positions include Ile20, 62–67 (GVGKTE), Asp255, Glu321, and Arg393.

It belongs to the ClpX chaperone family. HslU subfamily. As to quaternary structure, a double ring-shaped homohexamer of HslV is capped on each side by a ring-shaped HslU homohexamer. The assembly of the HslU/HslV complex is dependent on binding of ATP.

The protein resides in the cytoplasm. Its function is as follows. ATPase subunit of a proteasome-like degradation complex; this subunit has chaperone activity. The binding of ATP and its subsequent hydrolysis by HslU are essential for unfolding of protein substrates subsequently hydrolyzed by HslV. HslU recognizes the N-terminal part of its protein substrates and unfolds these before they are guided to HslV for hydrolysis. This chain is ATP-dependent protease ATPase subunit HslU, found in Helicobacter pylori (strain G27).